We begin with the raw amino-acid sequence, 509 residues long: Activin receptor type-1 (509 aa).

Residues 1-20 form the signal peptide; that stretch reads MVDGVMILPVLIMIALPSPS. Over 21–123 the chain is Extracellular; the sequence is MEDEKPKVNP…FPGTQNFHLE (103 aa). N-linked (GlcNAc...) asparagine glycosylation occurs at Asn102. The helical transmembrane segment at 124 to 146 threads the bilayer; it reads VGLIILSVVFAVCLLACLLGVAL. Topologically, residues 147–509 are cytoplasmic; it reads RKFKRRNQER…NSLDKLKTDC (363 aa). The GS domain occupies 178 to 207; it reads STLADLLDHSCTSGSGSGLPFLVQRTVARQ. The region spanning 208 to 502 is the Protein kinase domain; it reads ITLLECVGKG…KTLTKIDNSL (295 aa). Residues 214 to 222 and Lys235 contribute to the ATP site; that span reads VGKGRYGEV. The active-site Proton acceptor is Asp336. Ser501 is subject to Phosphoserine.

It belongs to the protein kinase superfamily. TKL Ser/Thr protein kinase family. TGFB receptor subfamily. In terms of assembly, interacts with FKBP1A. Interacts with FCHO1. Interacts with CLU. Interacts with type II receptors AMHR2 and ACVR2A. Interacts with BMP7. Interacts with GDF2/BMP9. Interacts with BMP6 (when glycosylated); the interaction may induce HAMP expression. Interacts with TSC22D1/TSC-22. Mg(2+) serves as cofactor. The cofactor is Mn(2+). As to expression, expressed in normal parenchymal cells, endothelial cells, fibroblasts and tumor-derived epithelial cells.

Its subcellular location is the membrane. The catalysed reaction is L-threonyl-[receptor-protein] + ATP = O-phospho-L-threonyl-[receptor-protein] + ADP + H(+). It carries out the reaction L-seryl-[receptor-protein] + ATP = O-phospho-L-seryl-[receptor-protein] + ADP + H(+). Its function is as follows. Bone morphogenetic protein (BMP) type I receptor that is involved in a wide variety of biological processes, including bone, heart, cartilage, nervous, and reproductive system development and regulation. As a type I receptor, forms heterotetrameric receptor complexes with the type II receptors AMHR2, ACVR2A or ACVR2B. Upon binding of ligands such as BMP7 or GDF2/BMP9 to the heteromeric complexes, type II receptors transphosphorylate ACVR1 intracellular domain. In turn, ACVR1 kinase domain is activated and subsequently phosphorylates SMAD1/5/8 proteins that transduce the signal. In addition to its role in mediating BMP pathway-specific signaling, suppresses TGFbeta/activin pathway signaling by interfering with the binding of activin to its type II receptor. Besides canonical SMAD signaling, can activate non-canonical pathways such as p38 mitogen-activated protein kinases/MAPKs. May promote the expression of HAMP, potentially via its interaction with BMP6. The chain is Activin receptor type-1 (ACVR1) from Homo sapiens (Human).